The following is a 53-amino-acid chain: UPF0391 membrane protein BPSS2216 (53 aa).

2 helical membrane-spanning segments follow: residues 5–25 (ALVF…GIAA) and 30–50 (IAKI…VLGV).

The protein belongs to the UPF0391 family.

Its subcellular location is the cell membrane. The sequence is that of UPF0391 membrane protein BPSS2216 from Burkholderia pseudomallei (strain K96243).